A 314-amino-acid polypeptide reads, in one-letter code: Ribosomal RNA small subunit methyltransferase H (314 aa).

S-adenosyl-L-methionine contacts are provided by residues 37 to 39 (GGH), Asp-56, Phe-86, Asp-108, and His-115.

It belongs to the methyltransferase superfamily. RsmH family.

Its subcellular location is the cytoplasm. It catalyses the reaction cytidine(1402) in 16S rRNA + S-adenosyl-L-methionine = N(4)-methylcytidine(1402) in 16S rRNA + S-adenosyl-L-homocysteine + H(+). In terms of biological role, specifically methylates the N4 position of cytidine in position 1402 (C1402) of 16S rRNA. This Leptospira biflexa serovar Patoc (strain Patoc 1 / ATCC 23582 / Paris) protein is Ribosomal RNA small subunit methyltransferase H.